Reading from the N-terminus, the 100-residue chain is MYB-like transcription factor TCL2 (100 aa).

In terms of domain architecture, Myb-like spans 37 to 74 (TEQEEDLIFRMHRLVGDRWDLIAGRVVGREAKDIERYW).

As to quaternary structure, interacts with GL3. As to expression, expressed in cotyledons, petioles, rosette leaves, hydathodes, cauline leaves, stems, pedicels and flower buds.

The protein resides in the nucleus. In terms of biological role, MYB-type transcription factor involved in trichome cell specification. Acts as a negative regulator of trichome patterning and formation. May function by suppressing the expression of GL3. This chain is MYB-like transcription factor TCL2 (TCL2), found in Arabidopsis thaliana (Mouse-ear cress).